The primary structure comprises 367 residues: Peptide chain release factor 2 (367 aa).

Glutamine 254 is modified (N5-methylglutamine).

The protein belongs to the prokaryotic/mitochondrial release factor family. Methylated by PrmC. Methylation increases the termination efficiency of RF2.

It localises to the cytoplasm. Its function is as follows. Peptide chain release factor 2 directs the termination of translation in response to the peptide chain termination codons UGA and UAA. The chain is Peptide chain release factor 2 from Leptospira interrogans serogroup Icterohaemorrhagiae serovar Lai (strain 56601).